The following is a 117-amino-acid chain: Large ribosomal subunit protein uL22 (117 aa).

It belongs to the universal ribosomal protein uL22 family. Part of the 50S ribosomal subunit.

In terms of biological role, this protein binds specifically to 23S rRNA; its binding is stimulated by other ribosomal proteins, e.g. L4, L17, and L20. It is important during the early stages of 50S assembly. It makes multiple contacts with different domains of the 23S rRNA in the assembled 50S subunit and ribosome. Functionally, the globular domain of the protein is located near the polypeptide exit tunnel on the outside of the subunit, while an extended beta-hairpin is found that lines the wall of the exit tunnel in the center of the 70S ribosome. In Chlorobium phaeobacteroides (strain BS1), this protein is Large ribosomal subunit protein uL22.